The chain runs to 335 residues: ADP-L-glycero-D-manno-heptose-6-epimerase (335 aa).

Residues 11–12 (FI), 32–33 (DD), Lys39, 75–79 (EGACS), and Asn92 each bind NADP(+). Tyr139 (proton acceptor) is an active-site residue. Residue Lys143 coordinates NADP(+). Asn172 is a substrate binding site. Residues Val173 and Lys181 each coordinate NADP(+). The active-site Proton acceptor is the Lys181. Substrate-binding positions include Arg183, His190, 204 to 207 (FGDY), Arg217, and Tyr296.

Belongs to the NAD(P)-dependent epimerase/dehydratase family. HldD subfamily. Homopentamer. NADP(+) serves as cofactor.

The catalysed reaction is ADP-D-glycero-beta-D-manno-heptose = ADP-L-glycero-beta-D-manno-heptose. Its pathway is nucleotide-sugar biosynthesis; ADP-L-glycero-beta-D-manno-heptose biosynthesis; ADP-L-glycero-beta-D-manno-heptose from D-glycero-beta-D-manno-heptose 7-phosphate: step 4/4. Functionally, catalyzes the interconversion between ADP-D-glycero-beta-D-manno-heptose and ADP-L-glycero-beta-D-manno-heptose via an epimerization at carbon 6 of the heptose. This Polaromonas naphthalenivorans (strain CJ2) protein is ADP-L-glycero-D-manno-heptose-6-epimerase.